Reading from the N-terminus, the 820-residue chain is Probable ATP-dependent RNA helicase DDX23 (820 aa).

The span at methionine 1–lysine 42 shows a compositional bias: basic and acidic residues. Residues methionine 1–serine 244 are disordered. Serine 14 and serine 16 each carry phosphoserine. Basic residues predominate over residues aspartate 43–serine 65. A compositionally biased stretch (basic and acidic residues) spans lysine 66–arginine 105. Phosphoserine is present on residues serine 107 and serine 109. Composition is skewed to basic and acidic residues over residues arginine 112 to proline 137, leucine 147 to asparagine 226, and glycine 233 to serine 244. Positions arginine 391–arginine 419 match the Q motif motif. The Helicase ATP-binding domain occupies isoleucine 422–valine 627. Residue alanine 435–threonine 442 coordinates ATP. The DEAD box motif lies at aspartate 549–aspartate 552. The Helicase C-terminal domain occupies lysine 651–proline 799. Glycyl lysine isopeptide (Lys-Gly) (interchain with G-Cter in SUMO2) cross-links involve residues lysine 686 and lysine 811.

It belongs to the DEAD box helicase family. DDX23/PRP28 subfamily. In terms of assembly, the phosphorylated form (by SRPK2) is a component of the U4/U6-U5 tri-snRNP complex composed of the U4, U6 and U5 snRNAs and at least PRPF3, PRPF4, PRPF6, PRPF8, PRPF31, SNRNP200, TXNL4A, WDR57, SNRNP40, DDX23, CD2BP2, PPIH, SNU13, EFTUD2, SART1 and USP39. Identified in the spliceosome C complex. Interacts with ERBB4. Interacts with ERCC6. In vitro phosphorylated by CLK1 and U1 snRNP-associated protein kinase. Phosphorylated by SRPK2 and this phosphorylation is required for its association with the tri-snRNP (U4/U6-U5 tri-small nuclear ribonucleoproteins) and subsequent spliceosomal B complex formation. May be phosphorylated by SRPK2 on Ser residues in the SR domain; the phosphorylation is required for the removal of inappropriate R-loops during transcription.

It localises to the nucleus. Its subcellular location is the chromosome. The catalysed reaction is ATP + H2O = ADP + phosphate + H(+). Involved in pre-mRNA splicing and its phosphorylated form (by SRPK2) is required for spliceosomal B complex formation. Independently of its spliceosome formation function, required for the suppression of incorrect R-loops formed during transcription; R-loops are composed of a DNA:RNA hybrid and the associated non-template single-stranded DNA. The sequence is that of Probable ATP-dependent RNA helicase DDX23 from Pongo abelii (Sumatran orangutan).